We begin with the raw amino-acid sequence, 368 residues long: UDP-galactose/UDP-N-acetylglucosamine transporter srf-3 (368 aa).

The next 8 membrane-spanning stretches (helical) occupy residues 72-92 (FVST…CLFL), 118-138 (LKVC…YVAA), 145-165 (TFMI…VIIL), 174-194 (WFAL…GTKA), 203-223 (FVGF…GIYF), 235-254 (LWMR…FSAI), 273-293 (SIVW…AVCI), and 317-337 (IFLF…LVIF).

This sequence belongs to the nucleotide-sugar transporter family. SLC35A subfamily. As to expression, expressed exclusively in pharyngeal cells g1 and g2, lateral seam cells, spermatheca and vas deferens.

It localises to the golgi apparatus membrane. In terms of biological role, acts as a transporter of both UDP-galactose and UDP-N-acetylglucosamine into the Golgi lumen. Apparently transports UDP-galactose and UDP-N-acetylglucosamine simultaneously, and independently, by an unknown mechanism. Functions redundantly with nucleotide sugar transporter nstp-4. May be involved in gonadal development. This is UDP-galactose/UDP-N-acetylglucosamine transporter srf-3 (srf-3) from Caenorhabditis elegans.